Here is a 183-residue protein sequence, read N- to C-terminus: ATP-dependent protease subunit HslV (183 aa).

Residue T7 is part of the active site. The Na(+) site is built by G162, C165, and T168.

Belongs to the peptidase T1B family. HslV subfamily. In terms of assembly, a double ring-shaped homohexamer of HslV is capped on each side by a ring-shaped HslU homohexamer. The assembly of the HslU/HslV complex is dependent on binding of ATP.

The protein resides in the cytoplasm. The catalysed reaction is ATP-dependent cleavage of peptide bonds with broad specificity.. Allosterically activated by HslU binding. Its function is as follows. Protease subunit of a proteasome-like degradation complex believed to be a general protein degrading machinery. This Chromobacterium violaceum (strain ATCC 12472 / DSM 30191 / JCM 1249 / CCUG 213 / NBRC 12614 / NCIMB 9131 / NCTC 9757 / MK) protein is ATP-dependent protease subunit HslV.